The chain runs to 183 residues: Glutathione-regulated potassium-efflux system ancillary protein KefG (183 aa).

It belongs to the NAD(P)H dehydrogenase (quinone) family. KefG subfamily. Interacts with KefB.

The protein localises to the cell inner membrane. It carries out the reaction a quinone + NADH + H(+) = a quinol + NAD(+). It catalyses the reaction a quinone + NADPH + H(+) = a quinol + NADP(+). In terms of biological role, regulatory subunit of a potassium efflux system that confers protection against electrophiles. Required for full activity of KefB. The chain is Glutathione-regulated potassium-efflux system ancillary protein KefG from Escherichia coli O6:K15:H31 (strain 536 / UPEC).